Here is a 162-residue protein sequence, read N- to C-terminus: Cyclic pyranopterin monophosphate synthase (162 aa).

Substrate contacts are provided by residues 75-77 (LCH) and 113-114 (ME). Residue D128 is part of the active site.

Belongs to the MoaC family. As to quaternary structure, homohexamer; trimer of dimers.

The enzyme catalyses (8S)-3',8-cyclo-7,8-dihydroguanosine 5'-triphosphate = cyclic pyranopterin phosphate + diphosphate. The protein operates within cofactor biosynthesis; molybdopterin biosynthesis. Its function is as follows. Catalyzes the conversion of (8S)-3',8-cyclo-7,8-dihydroguanosine 5'-triphosphate to cyclic pyranopterin monophosphate (cPMP). The polypeptide is Cyclic pyranopterin monophosphate synthase (Burkholderia lata (strain ATCC 17760 / DSM 23089 / LMG 22485 / NCIMB 9086 / R18194 / 383)).